A 325-amino-acid polypeptide reads, in one-letter code: Glycerol-3-phosphate dehydrogenase [NAD(P)+] (325 aa).

NADPH-binding residues include Ser14, Phe15, Arg35, and Lys109. Sn-glycerol 3-phosphate contacts are provided by Lys109 and Gly137. Residue Ala141 coordinates NADPH. Sn-glycerol 3-phosphate is bound by residues Lys192, Asp247, Ser257, Arg258, and Asn259. The active-site Proton acceptor is Lys192. Arg258 contributes to the NADPH binding site. The NADPH site is built by Leu282 and Glu284.

The protein belongs to the NAD-dependent glycerol-3-phosphate dehydrogenase family.

Its subcellular location is the cytoplasm. The catalysed reaction is sn-glycerol 3-phosphate + NAD(+) = dihydroxyacetone phosphate + NADH + H(+). It carries out the reaction sn-glycerol 3-phosphate + NADP(+) = dihydroxyacetone phosphate + NADPH + H(+). Its pathway is membrane lipid metabolism; glycerophospholipid metabolism. In terms of biological role, catalyzes the reduction of the glycolytic intermediate dihydroxyacetone phosphate (DHAP) to sn-glycerol 3-phosphate (G3P), the key precursor for phospholipid synthesis. The chain is Glycerol-3-phosphate dehydrogenase [NAD(P)+] from Rickettsia africae (strain ESF-5).